We begin with the raw amino-acid sequence, 501 residues long: MTDTNVNIIRLTAAEIAAKVASGELTAVQVTEAHLARIDAVDEKVHAFLHVDREGALAQARAVDEKRERGEKLGPLAGVPLALKDIFTTEGIPTTVGSKILEGWIPPYDATLTKKLKAADVVILGKTNMDEFAMGSSTENSAYGPTGNPWDLSRIPGGSGGGSSAALASFEAPLAIGTDTGGSIRQPAAVTGTVGVKPTYGAVSRYGMVAFSSSLDQGGPCARTVLDAALLHEVIAGHDPLDSTSIDAPVPPVVEAARNGSVEGMRVGVVKQFRGEGYQAGVLQRFDESVALLKELGAEIVELDCPSFDLALSAYYLIAPSECSSNLARFDGLRYGVRVGDDGTRSAEEVTALTREAGFGDEVKRRIMLGTYALSSGYYDAYYGSAQKVRTLITRDFEKSFEQVDVIVSPTTPTTAFPIGERADDPMAMYLADLCTIPTNLAGNAAMSLPCGLAPEDNLPVGLQIIAPALKDDRLYKVGAAVEAAFVEKWGHPLIEEAPSL.

Active-site charge relay system residues include lysine 84 and serine 159. Serine 183 (acyl-ester intermediate) is an active-site residue.

The protein belongs to the amidase family. GatA subfamily. As to quaternary structure, heterotrimer of A, B and C subunits.

The enzyme catalyses L-glutamyl-tRNA(Gln) + L-glutamine + ATP + H2O = L-glutaminyl-tRNA(Gln) + L-glutamate + ADP + phosphate + H(+). Functionally, allows the formation of correctly charged Gln-tRNA(Gln) through the transamidation of misacylated Glu-tRNA(Gln) in organisms which lack glutaminyl-tRNA synthetase. The reaction takes place in the presence of glutamine and ATP through an activated gamma-phospho-Glu-tRNA(Gln). This chain is Glutamyl-tRNA(Gln) amidotransferase subunit A, found in Streptomyces avermitilis (strain ATCC 31267 / DSM 46492 / JCM 5070 / NBRC 14893 / NCIMB 12804 / NRRL 8165 / MA-4680).